The chain runs to 285 residues: Bifunctional protein FolD (285 aa).

NADP(+) is bound by residues 165–167 (GRS), Ser190, and Ile231.

It belongs to the tetrahydrofolate dehydrogenase/cyclohydrolase family. In terms of assembly, homodimer.

The enzyme catalyses (6R)-5,10-methylene-5,6,7,8-tetrahydrofolate + NADP(+) = (6R)-5,10-methenyltetrahydrofolate + NADPH. The catalysed reaction is (6R)-5,10-methenyltetrahydrofolate + H2O = (6R)-10-formyltetrahydrofolate + H(+). It functions in the pathway one-carbon metabolism; tetrahydrofolate interconversion. Catalyzes the oxidation of 5,10-methylenetetrahydrofolate to 5,10-methenyltetrahydrofolate and then the hydrolysis of 5,10-methenyltetrahydrofolate to 10-formyltetrahydrofolate. The polypeptide is Bifunctional protein FolD (Acetivibrio thermocellus (strain ATCC 27405 / DSM 1237 / JCM 9322 / NBRC 103400 / NCIMB 10682 / NRRL B-4536 / VPI 7372) (Clostridium thermocellum)).